A 1020-amino-acid polypeptide reads, in one-letter code: Protein SCAR3 (1020 aa).

Disordered stretches follow at residues 167–198 (NLSQGNKKFQKDKKHCKMKKKKTSSRSRDMSR), 351–382 (DEKPSYGEGIGGVDFHSKDNENDKSESGLRKR), and 802–827 (DYLSDNHSLSNSEPWEESSDSHGRKE). Residues 174–191 (KFQKDKKHCKMKKKKTSS) are compositionally biased toward basic residues. Over residues 365-382 (FHSKDNENDKSESGLRKR) the composition is skewed to basic and acidic residues. Residues 802–814 (DYLSDNHSLSNSE) show a composition bias toward polar residues. The 19-residue stretch at 954 to 972 (ETGDFLQQIRTQQFNLRPV) folds into the WH2 domain.

Belongs to the SCAR/WAVE family. In terms of assembly, binds BRK1. Interacts with SPK1, ABI1, ABI2, ABI3 and ABI4. Expressed in expanding cotyledons, expanding leaves and expanding siliques containing developing embryos. Detected in unopened flower buds. Reduced expression in mature leaves and mature cotyledons.

The protein resides in the cytoplasm. It is found in the cytoskeleton. In terms of biological role, involved in regulation of actin and microtubule organization. Part of a WAVE complex that activates the Arp2/3 complex. Regulates trichome branch positioning and expansion. The sequence is that of Protein SCAR3 (SCAR3) from Arabidopsis thaliana (Mouse-ear cress).